Consider the following 194-residue polypeptide: Probable GTP-binding protein EngB (194 aa).

In terms of domain architecture, EngB-type G spans 22–194 (DLPEYALAGR…AWQFIKEGME (173 aa)). GTP is bound by residues 30–37 (GRSNVGKS), 57–61 (GKTQT), 75–78 (DVPG), 142–145 (TKAD), and 174–176 (FSS). Positions 37 and 59 each coordinate Mg(2+).

It belongs to the TRAFAC class TrmE-Era-EngA-EngB-Septin-like GTPase superfamily. EngB GTPase family. It depends on Mg(2+) as a cofactor.

In terms of biological role, necessary for normal cell division and for the maintenance of normal septation. This is Probable GTP-binding protein EngB from Listeria monocytogenes serovar 1/2a (strain ATCC BAA-679 / EGD-e).